The sequence spans 306 residues: Aspartate carbamoyltransferase catalytic subunit (306 aa).

Carbamoyl phosphate contacts are provided by Arg55 and Thr56. Lys85 serves as a coordination point for L-aspartate. Carbamoyl phosphate is bound by residues Arg106, His133, and Gln136. The L-aspartate site is built by Arg166 and Arg228. Residues Leu264 and Pro265 each contribute to the carbamoyl phosphate site.

It belongs to the aspartate/ornithine carbamoyltransferase superfamily. ATCase family. In terms of assembly, heterododecamer (2C3:3R2) of six catalytic PyrB chains organized as two trimers (C3), and six regulatory PyrI chains organized as three dimers (R2).

The enzyme catalyses carbamoyl phosphate + L-aspartate = N-carbamoyl-L-aspartate + phosphate + H(+). It functions in the pathway pyrimidine metabolism; UMP biosynthesis via de novo pathway; (S)-dihydroorotate from bicarbonate: step 2/3. Catalyzes the condensation of carbamoyl phosphate and aspartate to form carbamoyl aspartate and inorganic phosphate, the committed step in the de novo pyrimidine nucleotide biosynthesis pathway. The chain is Aspartate carbamoyltransferase catalytic subunit from Serratia marcescens.